The chain runs to 512 residues: Plastidal glycolate/glycerate translocator 1, chloroplastic (512 aa).

The transit peptide at 1–76 (MATLLATPIF…MNFERKLSVQ (76 aa)) directs the protein to the chloroplast. Alanine 77 carries the N-acetylalanine modification. Transmembrane regions (helical) follow at residues 93–113 (VIAI…DYFL), 127–147 (ALFG…VVPA), 160–180 (FLFI…VLPL), 195–215 (YIVA…AIAV), 238–258 (LELW…LFYP), 270–290 (PFLL…PSSI), 293–313 (VFHP…AFGY), 336–356 (AGDI…FSMF), 367–387 (AEIF…TALV), 398–418 (TVSI…VSLF), 425–445 (LTAA…QVVL), and 480–500 (LPFC…LCSV).

Belongs to the CidB/LrgB family. Expressed in leaves, stems and flowers, but not in roots.

It localises to the plastid. Its subcellular location is the chloroplast membrane. Functionally, glycolate/glycerate transporter required for photorespiration. The chain is Plastidal glycolate/glycerate translocator 1, chloroplastic (PLGG1) from Arabidopsis thaliana (Mouse-ear cress).